The primary structure comprises 119 residues: Large ribosomal subunit protein uL24 (119 aa).

This sequence belongs to the universal ribosomal protein uL24 family. Part of the 50S ribosomal subunit.

In terms of biological role, one of two assembly initiator proteins, it binds directly to the 5'-end of the 23S rRNA, where it nucleates assembly of the 50S subunit. One of the proteins that surrounds the polypeptide exit tunnel on the outside of the subunit. The sequence is that of Large ribosomal subunit protein uL24 from Clavibacter sepedonicus (Clavibacter michiganensis subsp. sepedonicus).